An 81-amino-acid chain; its full sequence is UPF0386 protein Smed_0945 (81 aa).

This sequence belongs to the UPF0386 family.

In Sinorhizobium medicae (strain WSM419) (Ensifer medicae), this protein is UPF0386 protein Smed_0945.